A 125-amino-acid polypeptide reads, in one-letter code: Large ribosomal subunit protein bL20 (125 aa).

Belongs to the bacterial ribosomal protein bL20 family.

Binds directly to 23S ribosomal RNA and is necessary for the in vitro assembly process of the 50S ribosomal subunit. It is not involved in the protein synthesizing functions of that subunit. The polypeptide is Large ribosomal subunit protein bL20 (Methylobacterium nodulans (strain LMG 21967 / CNCM I-2342 / ORS 2060)).